A 382-amino-acid polypeptide reads, in one-letter code: Per os infectivity factor 2 (382 aa).

In terms of assembly, forms the PIF complex together with PIF1 and PIF3. The complex also interacts with per os infectivity factor PIF0.

In terms of biological role, per os infectivity factor that mediates the specific binding of occluded virions (ODV) to the host midgut target cells. The chain is Per os infectivity factor 2 from Autographa californica nuclear polyhedrosis virus (AcMNPV).